A 448-amino-acid chain; its full sequence is Two-component sensor PhoQ (448 aa).

The signal sequence occupies residues 1-33; the sequence is MIRSLRIRLMLGAAALAVLFMLALLPALQRAFG. The helical transmembrane segment at 169-189 threads the bilayer; sequence WLGGALLVLLGLLWLGLTWGF. An HAMP domain is found at 186–237; the sequence is TWGFRAMRGLSSELDQIESGERESLSEEHPRELLRLTHSLNRLLRSEHKQRE. The 204-residue stretch at 245 to 448 folds into the Histidine kinase domain; it reads DLAHSLKTPL…ACFRIRFATV (204 aa). Histidine 248 is subject to Phosphohistidine; by autocatalysis.

The protein localises to the membrane. It carries out the reaction ATP + protein L-histidine = ADP + protein N-phospho-L-histidine.. Member of the two-component regulatory system PhoP/PhoQ that plays a role in the regulation of resistance towards polymyxin B and cationic antimicrobial peptides in response to limiting concentrations of Mg(2+). May function as a membrane-associated protein kinase that phosphorylates PhoP in response to environmental signals leading to activation of specific gene promoters. This Pseudomonas aeruginosa (strain ATCC 15692 / DSM 22644 / CIP 104116 / JCM 14847 / LMG 12228 / 1C / PRS 101 / PAO1) protein is Two-component sensor PhoQ (phoQ).